Reading from the N-terminus, the 262-residue chain is Putative protein-methionine-sulfoxide reductase subunit YedZ1 (262 aa).

The protein belongs to the MsrP family.

Its function is as follows. Part of the YedY1-YedZ1 system that may repair oxidized proteins containing methionine sulfoxide residues (Met-O). The chain is Putative protein-methionine-sulfoxide reductase subunit YedZ1 from Azospira oryzae (strain ATCC BAA-33 / DSM 13638 / PS) (Dechlorosoma suillum).